Consider the following 1505-residue polypeptide: MLCVAGARLKRELDATATVLANRQDESEQSRKRLIEQSREFKKNTPEDLRKQVAPLLKSFQGEIDALSKRSKEAEAAFLNVYKRLIDVPDPVPALDLGQQLQLKVQRLHDIETENQKLRETLEEYNKEFAEVKNQEVTIKALKEKIREYEQTLKNQAETIALEKEQKLQNDFAEKERKLQETQMSTTSKLEEAEHKVQSLQTALEKTRTELFDLKTKYDEETTAKADEIEMIMTDLERANQRAEVAQREAETLREQLSSANHSLQLASQIQKAPDVEQAIEVLTRSSLEVELAAKEREIAQLVEDVQRLQASLTKLRENSASQISQLEQQLSAKNSTLKQLEEKLKGQADYEEVKKELNILKSMEFAPSEGAGTQDAAKPLEVLLLEKNRSLQSENAALRISNSDLSGSARRKGKDQPESRRPGSLPAPPPSQLPRNPGEQASNTNGTHQFSPAGLSQDFFSSSLASPSLPLASTGKFALNSLLQRQLMQSFYSKAMQEAGSTSMIFSTGPYSTNSISSQSPLQQSPDVNGMAPSPSQSESAGSVSEGEEMDTAEIARQVKEQLIKHNIGQRIFGHYVLGLSQGSVSEILARPKPWNKLTVRGKEPFHKMKQFLSDEQNILALRSIQGRQRENPGQSLNRLFQEVPKRRNGSEGNITTRIRASETGSDEAIKSILEQAKRELQVQKTAEPAQPSSASGSGNSDDAIRSILQQARREMEAQQAALDPALKQAPLSQSDITILTPKLLSTSPMPTVSSYPPLAISLKKPSAAPEAGASALPNPPALKKEAQDAPGLDPQGAADCAQGVLRQVKNEVGRSGAWKDHWWSAVQPERRNAASSEEAKAEETGGGKEKGSGGSGGGSQPRAERSQLQGPSSSEYWKEWPSAESPYSQSSELSLTGASRSETPQNSPLPSSPIVPMSKPTKPSVPPLTPEQYEVYMYQEVDTIELTRQVKEKLAKNGICQRIFGEKVLGLSQGSVSDMLSRPKPWSKLTQKGREPFIRMQLWLNGELGQGVLPVQGQQQGPVLHSVTSLQDPLQQGCVSSESTPKTSASCSPAPESPMSSSESVKSLTELVQQPCPPIEASKDSKPPEPSDPPASDSQPTTPLPLSGHSALSIQELVAMSPELDTYGITKRVKEVLTDNNLGQRLFGETILGLTQGSVSDLLARPKPWHKLSLKGREPFVRMQLWLNDPNNVEKLMDMKRMEKKAYMKRRHSSVSDSQPCEPPSVGTEYSQGASPQPQHQLKKPRVVLAPEEKEALKRAYQQKPYPSPKTIEDLATQLNLKTSTVINWFHNYRSRIRRELFIEEIQAGSQGQAGASDSPSARSGRAAPSSEGDSCDGVEATEGPGSADTEEPKSQGEAEREEVPRPAEQTEPPPSGTPGPDDARDDDHEGGPVEGPGPLPSPASATATAAPAAPEDAATSAAAAPGEGPAAPSSAPPPSNSSSSSAPRRPSSLQSLFGLPEAAGARDSRDNPLRKKKAANLNSIIHRLEKAASREEPIEWEF.

A coiled-coil region spans residues 56 to 407; the sequence is LLKSFQGEID…ALRISNSDLS (352 aa). 2 stretches are compositionally biased toward polar residues: residues 396 to 407 and 440 to 451; these read NAALRISNSDLS and EQASNTNGTHQF. 4 disordered regions span residues 396 to 455, 512 to 552, 646 to 669, and 682 to 704; these read NAAL…SPAG, YSTN…EEMD, PKRR…GSDE, and LQVQ…NSDD. Low complexity predominate over residues 516 to 546; that stretch reads SISSQSPLQQSPDVNGMAPSPSQSESAGSVS. Glutamate 540 bears the Phosphoserine mark. A DNA-binding region (CUT 1) is located at residues 542–629; that stretch reads AGSVSEGEEM…ILALRSIQGR (88 aa). Residues 694-703 are compositionally biased toward low complexity; the sequence is SSASGSGNSD. Serine 763 carries the phosphoserine modification. The tract at residues 768–802 is disordered; sequence SAAPEAGASALPNPPALKKEAQDAPGLDPQGAADC. Residues lysine 785, lysine 811, and lysine 842 each participate in a glycyl lysine isopeptide (Lys-Gly) (interchain with G-Cter in SUMO2) cross-link. The segment covering 815–853 has biased composition (basic and acidic residues); that stretch reads GRSGAWKDHWWSAVQPERRNAASSEEAKAEETGGGKEKG. The segment at 815–930 is disordered; it reads GRSGAWKDHW…KPTKPSVPPL (116 aa). 2 stretches are compositionally biased toward polar residues: residues 868 to 877 and 887 to 911; these read SQLQGPSSSE and SPYS…NSPL. Serine 909 bears the Phosphoserine mark. A DNA-binding region (CUT 2) is located at residues 934–1021; the sequence is QYEVYMYQEV…QGVLPVQGQQ (88 aa). Positions 1036–1049 are enriched in polar residues; the sequence is LQQGCVSSESTPKT. The interval 1036 to 1110 is disordered; the sequence is LQQGCVSSES…QPTTPLPLSG (75 aa). Over residues 1050 to 1066 the composition is skewed to low complexity; it reads SASCSPAPESPMSSSES. Phosphoserine is present on residues serine 1059 and serine 1069. The segment at residues 1117–1204 is a DNA-binding region (CUT 3); that stretch reads QELVAMSPEL…VEKLMDMKRM (88 aa). The disordered stretch occupies residues 1210 to 1247; the sequence is MKRRHSSVSDSQPCEPPSVGTEYSQGASPQPQHQLKKP. Residues 1230–1242 are compositionally biased toward polar residues; it reads TEYSQGASPQPQH. A DNA-binding region (homeobox) is located at residues 1244-1303; that stretch reads LKKPRVVLAPEEKEALKRAYQQKPYPSPKTIEDLATQLNLKTSTVINWFHNYRSRIRREL. Residue serine 1270 is modified to Phosphoserine. Residue lysine 1284 forms a Glycyl lysine isopeptide (Lys-Gly) (interchain with G-Cter in SUMO2) linkage. The disordered stretch occupies residues 1312–1480; that stretch reads SQGQAGASDS…SRDNPLRKKK (169 aa). Residues 1316-1333 are compositionally biased toward low complexity; it reads AGASDSPSARSGRAAPSS. Residue serine 1337 is modified to Phosphoserine. Composition is skewed to basic and acidic residues over residues 1353 to 1368 and 1384 to 1394; these read EEPK…EVPR and DDARDDDHEGG. 2 stretches are compositionally biased toward low complexity: residues 1405-1436 and 1443-1455; these read PASA…AAPS and NSSS…RPSS. Serine 1455 is subject to Phosphoserine. The segment covering 1467-1476 has biased composition (basic and acidic residues); sequence GARDSRDNPL. A phosphoserine mark is found at serine 1486 and serine 1496.

Belongs to the CUT homeobox family. In terms of assembly, interacts with BANP. Interacts with SATB1 (via DNA-binding domains); the interaction inhibits the attachment of both proteins to DNA. In terms of processing, phosphorylated by PKA. As cells progress into S phase, a fraction of CUX1 molecules is proteolytically processed into N-terminally truncated proteins of 110 kDa by CTSL. Cell cycle-dependent processing of CUX1 serves to generate a CDP/Cux p110 with distinct DNA binding and transcriptional properties.

It is found in the nucleus. In terms of biological role, transcription factor involved in the control of neuronal differentiation in the brain. Regulates dendrite development and branching, and dendritic spine formation in cortical layers II-III. Also involved in the control of synaptogenesis. In addition, it has probably a broad role in mammalian development as a repressor of developmentally regulated gene expression. May act by preventing binding of positively-activing CCAAT factors to promoters. Component of nf-munr repressor; binds to the matrix attachment regions (MARs) (5' and 3') of the immunoglobulin heavy chain enhancer. Represses T-cell receptor (TCR) beta enhancer function by binding to MARbeta, an ATC-rich DNA sequence located upstream of the TCR beta enhancer. Binds to the TH enhancer; may require the basic helix-loop-helix protein TCF4 as a coactivator. Plays a role in cell cycle progression, in particular at the G1/S transition. As cells progress into S phase, a fraction of CUX1 molecules is proteolytically processed into N-terminally truncated proteins of 110 kDa. While CUX1 only transiently binds to DNA and carries the CCAAT-displacement activity, CDP/Cux p110 makes a stable interaction with DNA and stimulates expression of genes such as POLA1. In Homo sapiens (Human), this protein is Homeobox protein cut-like 1.